The chain runs to 102 residues: Flagellar hook-basal body complex protein FliE (102 aa).

Belongs to the FliE family.

It is found in the bacterial flagellum basal body. The protein is Flagellar hook-basal body complex protein FliE of Oceanobacillus iheyensis (strain DSM 14371 / CIP 107618 / JCM 11309 / KCTC 3954 / HTE831).